Here is a 197-residue protein sequence, read N- to C-terminus: Secreted RxLR effector protein 48 (197 aa).

The first 27 residues, 1–27 (MCCVSWNWVLACTFLLIFLSWWNCCND), serve as a signal peptide directing secretion. The RxLR-dEER signature appears at 58–79 (RLLRVNLAANAEVLTHEIEEEK).

The protein belongs to the RxLR effector family.

Its subcellular location is the secreted. The protein resides in the host nucleus. It is found in the host cytoplasm. In terms of biological role, secreted effector that completely suppresses the host cell death induced by cell death-inducing proteins. This Plasmopara viticola (Downy mildew of grapevine) protein is Secreted RxLR effector protein 48.